The sequence spans 628 residues: Translation factor GUF1, mitochondrial (628 aa).

A tr-type G domain is found at 27-209 (LPSRNFSIIA…AIISRIPPPS (183 aa)). Residues 36–43 (AHIDHGKS), 102–106 (DTPGH), and 156–159 (NKID) each bind GTP.

Belongs to the TRAFAC class translation factor GTPase superfamily. Classic translation factor GTPase family. LepA subfamily.

The protein resides in the mitochondrion inner membrane. The enzyme catalyses GTP + H2O = GDP + phosphate + H(+). Promotes mitochondrial protein synthesis. May act as a fidelity factor of the translation reaction, by catalyzing a one-codon backward translocation of tRNAs on improperly translocated ribosomes. Binds to mitochondrial ribosomes in a GTP-dependent manner. This is Translation factor GUF1, mitochondrial from Laccaria bicolor (strain S238N-H82 / ATCC MYA-4686) (Bicoloured deceiver).